The primary structure comprises 396 residues: G-protein coupled receptor 84 (396 aa).

At 1–26 (MWNASDVNFSCYHESVLGYRYVAVSW) the chain is on the extracellular side. Residues Asn3 and Asn8 are each glycosylated (N-linked (GlcNAc...) asparagine). The helical transmembrane segment at 27–47 (GIVVAVTGTVGNVLTLLALAI) threads the bilayer. The Cytoplasmic portion of the chain corresponds to 48–57 (QPKLRTRFNL). Residues 58–78 (LIANLTVADLLYCTLLQPFSV) form a helical membrane-spanning segment. Topologically, residues 79–94 (DTYLHLHWRTGATFCQ) are extracellular. Residues 95 to 115 (IFGFLLFVSNSVSILTLCLIA) traverse the membrane as a helical segment. Topologically, residues 116-144 (LGRYLLIAHPKLFPQVFSAKGIVLALVST) are cytoplasmic. A helical transmembrane segment spans residues 145 to 165 (WVVAVASFAPLWPIYILVPVV). Residues 166–180 (CTCSFDRIRGQPYTT) lie on the Extracellular side of the membrane. Residues 181–201 (ILMGIYFVVGLSSVGVFYCLI) traverse the membrane as a helical segment. The Cytoplasmic segment spans residues 202–320 (HQQVKRAAQA…PSEFGKVTRM (119 aa)). Phosphoserine is present on residues Ser221 and Ser224. A disordered region spans residues 243 to 310 (SGLASGGPSE…TKGAQRAQDS (68 aa)). Phosphothreonine occurs at positions 263 and 264. A helical transmembrane segment spans residues 321-341 (CFAVFLCFTLSYIPFLLLNIL). Residues 342–352 (DAKVQAPRVVH) lie on the Extracellular side of the membrane. Residues 353 to 373 (MLAANLTWLNGCINPVLYAAM) traverse the membrane as a helical segment. Residues 374–396 (NRQFRQAYGSLLRRGPQSFHRFH) lie on the Cytoplasmic side of the membrane.

It belongs to the G-protein coupled receptor 1 family. As to quaternary structure, interacts with ARRB2 and ARR3. In terms of processing, phosphorylated by a subset of GPR84-activating ligands. Constitutively phosphorylated at Ser-221 and Ser-224 in the absence of 2-HTP. By contrast, Thr-263 and Thr-264 are phosphorylated only following prior cell treatment with 2-HTP.

The protein localises to the cell membrane. Its function is as follows. G protein-coupled receptor that responds endogenously to dietary fatty acids or nutrient, specifically medium-chain free fatty acid (FFA) with carbon chain lengths of C9 to C14. Capric acid (C10:0), undecanoic acid (C11:0) and lauric acid (C12:0) are the most potent agonists. In immune cells, functions as a pro-inflammatory receptor via 6-OAU and promotes the expression of pro-inflammatory mediators such as TNFalpha, IL-6 and IL-12B as well as stimulating chemotactic responses through activation of signaling mediators AKT, ERK and NF-kappa-B. In addition, triggers increased bacterial adhesion and phagocytosis in macrophages and regulates pro-inflammatory function via enhancing NLRP3 inflammasome activation. Also plays an important role in inflammation by modulating neutrophil functions. Mechanistically, promotes neutrophil chemotaxis, reactive oxygen species (ROS) production and degranulation via LYN-AKT/ERK pathway. To regulate ROS, communicates with the two formyl peptide receptors FPR2 and FPR1 to control the NADPH oxidase activity in neutrophils. The sequence is that of G-protein coupled receptor 84 (GPR84) from Bos taurus (Bovine).